The following is a 163-amino-acid chain: Nucleotide-binding protein YajQ (163 aa).

It belongs to the YajQ family.

In terms of biological role, nucleotide-binding protein. This Salmonella heidelberg (strain SL476) protein is Nucleotide-binding protein YajQ.